Consider the following 99-residue polypeptide: Large ribosomal subunit protein eL36A (99 aa).

It belongs to the eukaryotic ribosomal protein eL36 family. As to quaternary structure, component of the large ribosomal subunit (LSU). Mature yeast ribosomes consist of a small (40S) and a large (60S) subunit. The 40S small subunit contains 1 molecule of ribosomal RNA (18S rRNA) and at least 33 different proteins. The large 60S subunit contains 3 rRNA molecules (25S, 5.8S and 5S rRNA) and at least 46 different proteins.

The protein resides in the cytoplasm. In terms of biological role, component of the ribosome, a large ribonucleoprotein complex responsible for the synthesis of proteins in the cell. The small ribosomal subunit (SSU) binds messenger RNAs (mRNAs) and translates the encoded message by selecting cognate aminoacyl-transfer RNA (tRNA) molecules. The large subunit (LSU) contains the ribosomal catalytic site termed the peptidyl transferase center (PTC), which catalyzes the formation of peptide bonds, thereby polymerizing the amino acids delivered by tRNAs into a polypeptide chain. The nascent polypeptides leave the ribosome through a tunnel in the LSU and interact with protein factors that function in enzymatic processing, targeting, and the membrane insertion of nascent chains at the exit of the ribosomal tunnel. The sequence is that of Large ribosomal subunit protein eL36A (rpl3601) from Schizosaccharomyces pombe (strain 972 / ATCC 24843) (Fission yeast).